A 98-amino-acid polypeptide reads, in one-letter code: Acylphosphatase (98 aa).

Positions 10 to 96 (ARLLRIRGRV…TDGAGFDCLP (87 aa)) constitute an Acylphosphatase-like domain. Active-site residues include arginine 25 and asparagine 43.

The protein belongs to the acylphosphatase family.

The catalysed reaction is an acyl phosphate + H2O = a carboxylate + phosphate + H(+). The polypeptide is Acylphosphatase (acyP) (Azoarcus sp. (strain BH72)).